Reading from the N-terminus, the 401-residue chain is MPNPDKHNFSSLSFGTLAVHGGNEIDKTSGAIRTPIVMANSYSLPYDPSTMDWSDTEEPSYTRNSGHNQICLQRKLAAMERGEDAAVFATGVAALHAVFFTFLKSGDHVIVGDVTYEAVWRLFAELLPERYNIEATFVDMGNMDAVRAAVRPKTKLIHTETVANPTTKVADIAALVSIAKDAGALLSVDSTFTPPPFFRPLELGVDLVIHSLTKYINGHGDAMGGVVIGSKKLVHHIKADALVDLGGTISPFNAWLITRGSVTLPLRLKQQFSTAEIVARYLESENRLAFVTYPGLERHDQHHLAKAQFGGKGYGAMMAFAVDGDPDTQNRFVSNLKVITSAVSLGHDETLIVHVGGGGRGGAERYPLNFQKYGHLRLSIGLEDPEDLIADIKNALDLTFA.

Lys-214 carries the N6-(pyridoxal phosphate)lysine modification.

It belongs to the trans-sulfuration enzymes family. Pyridoxal 5'-phosphate serves as cofactor.

It carries out the reaction L-canavanine + H2O = N-hydroxyguanidine + L-homoserine. Lyase involved in the degradation of canavanine, the delta-oxa-analog of arginine, allowing growth on canavanine as sole nitrogen and carbon source. Catalyzes the elimination of hydroxyguanidine from canavanine with a subsequent water addition to yield homoserine. This chain is Canavanine gamma-lyase, found in Rhizobium leguminosarum bv. trifolii (strain WSM2304).